The primary structure comprises 495 residues: Glutamyl-tRNA(Gln) amidotransferase subunit A (495 aa).

Active-site charge relay system residues include Lys-75 and Ser-150. The active-site Acyl-ester intermediate is Ser-174.

Belongs to the amidase family. GatA subfamily. As to quaternary structure, heterotrimer of A, B and C subunits.

The catalysed reaction is L-glutamyl-tRNA(Gln) + L-glutamine + ATP + H2O = L-glutaminyl-tRNA(Gln) + L-glutamate + ADP + phosphate + H(+). Allows the formation of correctly charged Gln-tRNA(Gln) through the transamidation of misacylated Glu-tRNA(Gln) in organisms which lack glutaminyl-tRNA synthetase. The reaction takes place in the presence of glutamine and ATP through an activated gamma-phospho-Glu-tRNA(Gln). In Paraburkholderia phytofirmans (strain DSM 17436 / LMG 22146 / PsJN) (Burkholderia phytofirmans), this protein is Glutamyl-tRNA(Gln) amidotransferase subunit A.